A 404-amino-acid chain; its full sequence is Multidrug resistance protein MdtH (404 aa).

Topologically, residues 1-12 (MSRVSQARNLGK) are cytoplasmic. The chain crosses the membrane as a helical span at residues 13-33 (YFLLIDNMLVVLGFFVVFPLI). The Periplasmic segment spans residues 34–98 (SIRFVDQMGW…GFATMGIAHE (65 aa)). The helical transmembrane segment at 99–116 (PWLLWFSCFLSGLGGTLF) threads the bilayer. Residues 117–138 (DPPRSALVVKLIRPEQRGRFFS) lie on the Cytoplasmic side of the membrane. Residues 139 to 159 (LLMMQDSAGAVIGALLGSWLL) traverse the membrane as a helical segment. Topologically, residues 160–164 (QYDFR) are periplasmic. Residues 165-185 (LVCAMGAILFIVCAIFNAWLL) form a helical membrane-spanning segment. Residues 186–213 (PAWKLSTVRTPVREGMRRVISDKRFVTY) lie on the Cytoplasmic side of the membrane. A helical transmembrane segment spans residues 214–234 (VLTLAGYYMLAVQVMLMLPIM). Residues 235–243 (VNDVAGSPA) lie on the Periplasmic side of the membrane. The chain crosses the membrane as a helical span at residues 244-264 (AVKWMYAIEACLSLTLLYPIA). Topologically, residues 265–276 (RWSEKRFRLEHR) are cytoplasmic. A helical transmembrane segment spans residues 277–297 (LMAGLLIMSLSMIPIGLAGNL). Residues 298 to 299 (QQ) lie on the Periplasmic side of the membrane. Residues 300-320 (LFTLICAFYIGSVIAEPARET) traverse the membrane as a helical segment. Residues 321 to 339 (LSASLTDARARGSYMGFSR) are Cytoplasmic-facing. A helical transmembrane segment spans residues 340-360 (LGLAIGGAIGYIGGGWLFDMG). Residues 361–367 (KTLAQPE) are Periplasmic-facing. Residues 368–388 (LPWMMLGIIGFITFLALGWQF) form a helical membrane-spanning segment. Topologically, residues 389–404 (SHKRTPRQYTGARRLI) are cytoplasmic.

Belongs to the major facilitator superfamily. DHA1 family. MdtH (TC 2.A.1.2.21) subfamily.

It is found in the cell inner membrane. This Salmonella arizonae (strain ATCC BAA-731 / CDC346-86 / RSK2980) protein is Multidrug resistance protein MdtH.